The chain runs to 419 residues: L-rhamnose isomerase (419 aa).

Positions 262, 294, and 296 each coordinate Mn(2+).

Belongs to the rhamnose isomerase family. Homotetramer. Mn(2+) serves as cofactor.

It is found in the cytoplasm. The catalysed reaction is L-rhamnopyranose = L-rhamnulose. It participates in carbohydrate degradation; L-rhamnose degradation; glycerone phosphate from L-rhamnose: step 1/3. Catalyzes the interconversion of L-rhamnose and L-rhamnulose. In Shigella boydii serotype 4 (strain Sb227), this protein is L-rhamnose isomerase.